The chain runs to 785 residues: Cadherin-7 (785 aa).

A signal peptide spans 1–27 (MKLGKVELCRFLQLIALFLCFSGMNQA). Positions 28–47 (ELPRSRSKPYFQLGRSRTKR) are excised as a propeptide. The Extracellular segment spans residues 28–607 (ELPRSRSKPY…AYILPAGLST (580 aa)). 5 Cadherin domains span residues 49 to 153 (WVWN…EPKF), 154 to 262 (LDGP…PPRF), 263 to 377 (PRRS…PPVF), 378 to 482 (SSPL…APEF), and 482 to 599 (FAMD…AEAY). 2 N-linked (GlcNAc...) asparagine glycosylation sites follow: asparagine 449 and asparagine 530. The chain crosses the membrane as a helical span at residues 608 to 628 (GALIAILACVLTLLVLILLIV). Over 629–785 (TMKRRKKEPL…YGNGQESLYS (157 aa)) the chain is Cytoplasmic.

It is found in the cell membrane. In terms of biological role, cadherins are calcium-dependent cell adhesion proteins. They preferentially interact with themselves in a homophilic manner in connecting cells; cadherins may thus contribute to the sorting of heterogeneous cell types. This Rattus norvegicus (Rat) protein is Cadherin-7 (Cdh7).